A 486-amino-acid polypeptide reads, in one-letter code: Serine/threonine-protein kinase 4 (486 aa).

The Protein kinase domain occupies 29–280 (FDVLEKLGEG…AIQLLQHPFV (252 aa)). Residues 35–43 (LGEGSYGSV) and lysine 58 each bind ATP. The active-site Proton acceptor is aspartate 148. Position 182 is a phosphothreonine; by autocatalysis (threonine 182). The stretch at 288-324 (ILRDLINEAMDIKLKRQEAQQRELDQEDEENSEEDET) forms a coiled coil. Residues 305–332 (EAQQRELDQEDEENSEEDETDSGTMVRA) form a disordered region. Positions 312 to 325 (DQEDEENSEEDETD) are enriched in acidic residues. The region spanning 432-479 (YEFLKTWSVDELQRRLSALDPMMEQEIEEIRQKYQSKRQPILDAIEAK) is the SARAH domain.

This sequence belongs to the protein kinase superfamily. STE Ser/Thr protein kinase family. STE20 subfamily. In terms of assembly, homodimer; mediated via the coiled-coil region. Requires Mg(2+) as cofactor. In terms of processing, proteolytically cleaved by caspase-3 during apoptosis at Asp-325 resulting in a 37 kDa form. Proteolytic cleavage results in kinase activation and nuclear translocation of the truncated form (MST1/N).

The protein resides in the cytoplasm. It localises to the nucleus. The catalysed reaction is L-seryl-[protein] + ATP = O-phospho-L-seryl-[protein] + ADP + H(+). It catalyses the reaction L-threonyl-[protein] + ATP = O-phospho-L-threonyl-[protein] + ADP + H(+). With respect to regulation, the C-terminal non-catalytic region inhibits the kinase activity, the enzyme is activated by caspase-cleavage. Homodimerization and autophosphorylation of Thr-182 is also required for full activation. Its function is as follows. Stress-activated, pro-apoptotic kinase which, following caspase-cleavage, enters the nucleus and induces chromatin condensation followed by internucleosomal DNA fragmentation. Key component of the Hippo signaling pathway which plays a pivotal role in organ size control and tumor suppression by restricting proliferation and promoting apoptosis. The core of this pathway is composed of a kinase cascade wherein STK3/MST2 and STK4/MST1, in complex with its regulatory protein SAV1, phosphorylates and activates LATS1/2 in complex with its regulatory protein MOB1, which in turn phosphorylates and inactivates YAP1 oncoprotein and WWTR1/TAZ. Phosphorylation of YAP1 by LATS2 inhibits its translocation into the nucleus to regulate cellular genes important for cell proliferation, cell death, and cell migration. Phosphorylates 'Ser-14' of histone H2B (H2BS14ph) during apoptosis. Phosphorylates FOXO3 upon oxidative stress, which results in its nuclear translocation and cell death initiation. In Gallus gallus (Chicken), this protein is Serine/threonine-protein kinase 4 (STK4).